A 266-amino-acid polypeptide reads, in one-letter code: uncharacterized protein (266 aa).

Transmembrane regions (helical) follow at residues 9–29, 79–99, 122–142, and 193–213; these read IFII…IELP, GIMT…INPF, LSVM…MLSG, and GWYL…MVFI.

Its subcellular location is the membrane. This is an uncharacterized protein from Dictyostelium discoideum (Social amoeba).